Consider the following 733-residue polypeptide: Catalase-peroxidase (733 aa).

An N-terminal signal peptide occupies residues 1–23 (MNNESKCPFAAAHGVRSPATARA). Residues 96–224 (WHSAGTYRTA…LAAVQMGLIY (129 aa)) constitute a cross-link (tryptophyl-tyrosyl-methioninium (Trp-Tyr) (with M-250)). Histidine 97 acts as the Proton acceptor in catalysis. Positions 224–250 (YVNPEGPDGNPDPVASGRDVRETFARM) form a cross-link, tryptophyl-tyrosyl-methioninium (Tyr-Met) (with W-96). Histidine 265 provides a ligand contact to heme b.

Belongs to the peroxidase family. Peroxidase/catalase subfamily. In terms of assembly, homodimer or homotetramer. It depends on heme b as a cofactor. Post-translationally, formation of the three residue Trp-Tyr-Met cross-link is important for the catalase, but not the peroxidase activity of the enzyme.

The catalysed reaction is H2O2 + AH2 = A + 2 H2O. The enzyme catalyses 2 H2O2 = O2 + 2 H2O. Its function is as follows. Bifunctional enzyme with both catalase and broad-spectrum peroxidase activity. The chain is Catalase-peroxidase from Azoarcus sp. (strain BH72).